Consider the following 78-residue polypeptide: Acyl carrier protein (78 aa).

The region spanning 2–77 is the Carrier domain; it reads SDTADRVQKI…DATKYIEEHK (76 aa). At Ser37 the chain carries O-(pantetheine 4'-phosphoryl)serine.

The protein belongs to the acyl carrier protein (ACP) family. 4'-phosphopantetheine is transferred from CoA to a specific serine of apo-ACP by AcpS. This modification is essential for activity because fatty acids are bound in thioester linkage to the sulfhydryl of the prosthetic group.

It is found in the cytoplasm. It functions in the pathway lipid metabolism; fatty acid biosynthesis. Its function is as follows. Carrier of the growing fatty acid chain in fatty acid biosynthesis. The sequence is that of Acyl carrier protein from Erythrobacter litoralis (strain HTCC2594).